Here is a 153-residue protein sequence, read N- to C-terminus: MFMKKSSIIVFFLTYGLFYVSSVLFPIDRTWYDALEKPSWTPPGMTIGMIWAVLFGLIALSVAIIYNNYGFKPKTFWFLFLLNYIFNQAFSYFQFSQKNLFLATVDCLLVAITTLLLIMFSSNLSKVSAWLLIPYFLWSAFATYLSWTIYSIN.

The next 5 membrane-spanning stretches (helical) occupy residues 7 to 27 (SIIV…LFPI), 45 to 65 (MTIG…VAII), 75 to 95 (TFWF…YFQF), 100 to 120 (LFLA…LIMF), and 127 to 149 (VSAW…SWTI).

This sequence belongs to the TspO/BZRP family. Monomer and homodimer. May also form higher oligomers.

It is found in the cell membrane. It localises to the membrane. Binds tetrapyrroles and promotes the photooxidative degradation of protoporphyrin IX. Can bind the benzodiazepine receptor agonist PK-11195 (in vitro); this interferes with photooxidative tetrapyrrole degradation. May play a role in the transmembrane transport of tetrapyrroles and similar compounds. The sequence is that of Tryptophan-rich protein TspO (tspO) from Bacillus cereus (strain ATCC 14579 / DSM 31 / CCUG 7414 / JCM 2152 / NBRC 15305 / NCIMB 9373 / NCTC 2599 / NRRL B-3711).